Consider the following 101-residue polypeptide: Small ribosomal subunit protein uS14 (101 aa).

The protein belongs to the universal ribosomal protein uS14 family. Part of the 30S ribosomal subunit. Contacts proteins S3 and S10.

In terms of biological role, binds 16S rRNA, required for the assembly of 30S particles and may also be responsible for determining the conformation of the 16S rRNA at the A site. The polypeptide is Small ribosomal subunit protein uS14 (Pasteurella multocida (strain Pm70)).